A 457-amino-acid chain; its full sequence is UDP-N-acetylmuramoylalanine--D-glutamate ligase (457 aa).

Residue 117 to 123 (GTNGKST) coordinates ATP.

Belongs to the MurCDEF family.

It localises to the cytoplasm. The catalysed reaction is UDP-N-acetyl-alpha-D-muramoyl-L-alanine + D-glutamate + ATP = UDP-N-acetyl-alpha-D-muramoyl-L-alanyl-D-glutamate + ADP + phosphate + H(+). Its pathway is cell wall biogenesis; peptidoglycan biosynthesis. Cell wall formation. Catalyzes the addition of glutamate to the nucleotide precursor UDP-N-acetylmuramoyl-L-alanine (UMA). This Paramagnetospirillum magneticum (strain ATCC 700264 / AMB-1) (Magnetospirillum magneticum) protein is UDP-N-acetylmuramoylalanine--D-glutamate ligase.